A 380-amino-acid polypeptide reads, in one-letter code: XK-related protein 9 (380 aa).

8 helical membrane-spanning segments follow: residues 10–30 (LLSA…AALV), 39–59 (VVCA…TQVF), 81–101 (LPVV…GIFI), 167–187 (CSLV…WALV), 228–248 (ALLL…WLLG), 264–284 (SLEF…FFNV), 294–314 (ITYY…LFVL), and 329–349 (TLMA…YLLL).

This sequence belongs to the XK family.

Its subcellular location is the cell membrane. The catalysed reaction is a 1,2-diacyl-sn-glycero-3-phospho-L-serine(in) = a 1,2-diacyl-sn-glycero-3-phospho-L-serine(out). In terms of biological role, phospholipid scramblase that promotes phosphatidylserine exposure on apoptotic cell surface. Phosphatidylserine is a specific marker only present at the surface of apoptotic cells and acts as a specific signal for engulfment. The polypeptide is XK-related protein 9 (Tetraodon nigroviridis (Spotted green pufferfish)).